The sequence spans 152 residues: Transcriptional regulator MraZ (152 aa).

2 SpoVT-AbrB domains span residues 5–52 and 81–124; these read ATLV…PLPE and ASEC…DEQT.

The protein belongs to the MraZ family. As to quaternary structure, forms oligomers.

The protein localises to the cytoplasm. Its subcellular location is the nucleoid. In terms of biological role, negatively regulates its own expression and that of the subsequent genes in the proximal part of the division and cell wall (dcw) gene cluster. Acts by binding directly to DNA. May also regulate the expression of genes outside the dcw cluster. The polypeptide is Transcriptional regulator MraZ (Pectobacterium carotovorum subsp. carotovorum (strain PC1)).